A 149-amino-acid chain; its full sequence is uncharacterized protein (149 aa).

A helical transmembrane segment spans residues 124 to 144; the sequence is IIIIALIIILANYAPSIIGKI.

Belongs to the M.jannaschii MJ0023/MJ0349/MJ1072/MJ1074/MJ1107/MJECL16 family.

Its subcellular location is the membrane. This is an uncharacterized protein from Methanocaldococcus jannaschii (strain ATCC 43067 / DSM 2661 / JAL-1 / JCM 10045 / NBRC 100440) (Methanococcus jannaschii).